The sequence spans 176 residues: 3-hydroxydecanoyl-[acyl-carrier-protein] dehydratase (176 aa).

His75 is a catalytic residue.

Belongs to the thioester dehydratase family. FabA subfamily. As to quaternary structure, homodimer.

Its subcellular location is the cytoplasm. It carries out the reaction a (3R)-hydroxyacyl-[ACP] = a (2E)-enoyl-[ACP] + H2O. The enzyme catalyses (3R)-hydroxydecanoyl-[ACP] = (2E)-decenoyl-[ACP] + H2O. The catalysed reaction is (2E)-decenoyl-[ACP] = (3Z)-decenoyl-[ACP]. It functions in the pathway lipid metabolism; fatty acid biosynthesis. In terms of biological role, necessary for the introduction of cis unsaturation into fatty acids. Catalyzes the dehydration of (3R)-3-hydroxydecanoyl-ACP to E-(2)-decenoyl-ACP and then its isomerization to Z-(3)-decenoyl-ACP. Can catalyze the dehydratase reaction for beta-hydroxyacyl-ACPs with saturated chain lengths up to 16:0, being most active on intermediate chain length. The chain is 3-hydroxydecanoyl-[acyl-carrier-protein] dehydratase from Glaesserella parasuis serovar 5 (strain SH0165) (Haemophilus parasuis).